The primary structure comprises 311 residues: Giardin subunit alpha-8 (311 aa).

Annexin repeat units follow at residues 5–73 (RKAY…IRCW), 75–146 (NRHE…DRWM), 154–223 (NNVK…AAHY), and 227–295 (EPSK…SLWR).

It belongs to the annexin family. Giardin subunit alpha subfamily.

It localises to the cytoplasm. Its subcellular location is the cytoskeleton. Functionally, giardins are involved in parasite attachment to the intestinal mucosa and in the cytoskeletal disassembly and reassembly that marks the transition from infectious trophozoite to transmissible cyst. They may interact with other cytoskeletal proteins such as microtubules in the microribbons or crossbridges, to maintain the integrity of the ventral disk. This chain is Giardin subunit alpha-8, found in Giardia intestinalis (Giardia lamblia).